The sequence spans 164 residues: ATP synthase subunit b (164 aa).

The chain crosses the membrane as a helical span at residues 6 to 26; it reads GELVGNFILVTGSVIVLLLLI.

The protein belongs to the ATPase B chain family. As to quaternary structure, F-type ATPases have 2 components, F(1) - the catalytic core - and F(0) - the membrane proton channel. F(1) has five subunits: alpha(3), beta(3), gamma(1), delta(1), epsilon(1). F(0) has three main subunits: a(1), b(2) and c(10-14). The alpha and beta chains form an alternating ring which encloses part of the gamma chain. F(1) is attached to F(0) by a central stalk formed by the gamma and epsilon chains, while a peripheral stalk is formed by the delta and b chains.

It is found in the cell membrane. Functionally, f(1)F(0) ATP synthase produces ATP from ADP in the presence of a proton or sodium gradient. F-type ATPases consist of two structural domains, F(1) containing the extramembraneous catalytic core and F(0) containing the membrane proton channel, linked together by a central stalk and a peripheral stalk. During catalysis, ATP synthesis in the catalytic domain of F(1) is coupled via a rotary mechanism of the central stalk subunits to proton translocation. Its function is as follows. Component of the F(0) channel, it forms part of the peripheral stalk, linking F(1) to F(0). This chain is ATP synthase subunit b, found in Streptococcus pyogenes serotype M3 (strain ATCC BAA-595 / MGAS315).